A 293-amino-acid chain; its full sequence is 2-pyrone-4,6-dicarboxylate hydrolase (293 aa).

Residues Met-1–Thr-20 are disordered. Substrate-binding positions include His-29–His-31, Tyr-47, Ser-75, Arg-122, Arg-128, Tyr-154, and His-178. Residue Asp-246 is the Proton acceptor of the active site. Substrate is bound at residue Asn-251.

Belongs to the metallo-dependent hydrolases superfamily. PDC hydrolase family. Monomer.

It carries out the reaction 2-oxo-2H-pyran-4,6-dicarboxylate + H2O = (1E)-4-oxobut-1-ene-1,2,4-tricarboxylate + H(+). It functions in the pathway secondary metabolite metabolism; lignin degradation. Strongly inhibited by 1 mM Zn(2+) ions. Also inhibited by pyridine-2,4-dicarboxylic acid, 5-hydroxyisophthalic acid and 5,5'-dithiobis(2-nitrobenzoic acid) (Ellman reagent). Its function is as follows. Contributes to the degradation of lignin at the level of the protocatechuate 4,5-cleavage pathway. Catalyzes the hydrolysis of 2-pyrone-4,6-dicarboxylate (PDC) to (4E)-oxalomesaconate (OMA). The keto form of OMA can tautomerize into the enol form, 4-carboxy-2-hydroxymuconate (CHM), under certain pH conditions. Also catalyzes the reverse reaction. Is essential for the growth of Sphingobium sp. SYK-6 on vanillate but is not responsible for the growth of this strain on syringate. This Sphingobium sp. (strain NBRC 103272 / SYK-6) protein is 2-pyrone-4,6-dicarboxylate hydrolase.